The following is a 379-amino-acid chain: MKTLLFLSCIVVAAYCACNDNLESVLDKYRNREIDSEAAELDGDDLIDYVNENQNLWTAKKQRRFSSVYGENDKAKWGLMGVNHVRLSVKGKQHLSKTKDLDLDIPESFDSRDNWPKCDSIKVIRDQSSCGSCWAFGAVEAMSDRICIASHGELQVTLSADDLLSCCKSCGFGCNGGDPLAAWRYWVKDGIVTGSNYTANNGCKPYPFPPCEHHSKKTHFDPCPHDLYPTPKCEKKCVSDYTDKTYSEDKFFGASAYGVKDDVEAIQKELMTHGPLEIAFEVYEDFLNYDGGVYVHTGGKLGGGHAVKLIGWGIDDGIPYWTVANSWNTDWGEDGFFRILRGVDECGIESGVVGGIPKLNSLTSRLHRHHRRHVYDDNY.

Positions 1–16 (MKTLLFLSCIVVAAYC) are cleaved as a signal peptide. Residues 17–104 (ACNDNLESVL…LSKTKDLDLD (88 aa)) constitute a propeptide that is removed on maturation. 6 disulfide bridges follow: C118–C147, C130–C174, C166–C233, C167–C170, C203–C237, and C211–C223. C133 is a catalytic residue. A glycan (N-linked (GlcNAc...) asparagine) is linked at N196. A glycan (N-linked (GlcNAc...) asparagine; atypical) is linked at N201. Residues H305 and N325 contribute to the active site.

This sequence belongs to the peptidase C1 family.

The chain is Cathepsin B-like cysteine proteinase 6 (cpr-6) from Caenorhabditis elegans.